A 166-amino-acid polypeptide reads, in one-letter code: 3-isopropylmalate dehydratase small subunit (166 aa).

The protein belongs to the LeuD family. LeuD type 2 subfamily. As to quaternary structure, heterodimer of LeuC and LeuD.

It catalyses the reaction (2R,3S)-3-isopropylmalate = (2S)-2-isopropylmalate. The protein operates within amino-acid biosynthesis; L-leucine biosynthesis; L-leucine from 3-methyl-2-oxobutanoate: step 2/4. Functionally, catalyzes the isomerization between 2-isopropylmalate and 3-isopropylmalate, via the formation of 2-isopropylmaleate. The sequence is that of 3-isopropylmalate dehydratase small subunit from Heliobacterium modesticaldum (strain ATCC 51547 / Ice1).